The chain runs to 597 residues: Adenine deaminase (597 aa).

Belongs to the metallo-dependent hydrolases superfamily. Adenine deaminase family. The cofactor is Mn(2+).

It catalyses the reaction adenine + H2O + H(+) = hypoxanthine + NH4(+). This chain is Adenine deaminase, found in Paracoccus denitrificans (strain Pd 1222).